Consider the following 324-residue polypeptide: tRNA pseudouridine synthase B (324 aa).

Catalysis depends on Asp49, which acts as the Nucleophile.

It belongs to the pseudouridine synthase TruB family. Type 1 subfamily.

The catalysed reaction is uridine(55) in tRNA = pseudouridine(55) in tRNA. Functionally, responsible for synthesis of pseudouridine from uracil-55 in the psi GC loop of transfer RNAs. The protein is tRNA pseudouridine synthase B of Brucella anthropi (strain ATCC 49188 / DSM 6882 / CCUG 24695 / JCM 21032 / LMG 3331 / NBRC 15819 / NCTC 12168 / Alc 37) (Ochrobactrum anthropi).